The following is an 882-amino-acid chain: Phosphoprotein p93 (882 aa).

Residues 250-297 (SSNAKPKPHLSSKSSSQGNTLQRSTSSFSTPNRKVSQPSDFSASPSRS) are disordered. The span at 266–297 (QGNTLQRSTSSFSTPNRKVSQPSDFSASPSRS) shows a compositional bias: polar residues. The residue at position 279 (threonine 279) is a Phosphothreonine; by CDC2. Phosphoserine; by CDC2 is present on residues serine 293, serine 300, serine 551, serine 556, and serine 590. Disordered regions lie at residues 562–678 (VTPQ…SGGE) and 809–833 (ESGN…YGTR). Low complexity-rich tracts occupy residues 579–601 (SLTE…SLRS) and 609–640 (ASST…PSIS). Serine 649 is subject to Phosphoserine. Residue threonine 650 is modified to Phosphothreonine. A compositionally biased stretch (polar residues) spans 819–832 (GIHSVSTKPSSYGT).

It localises to the cytoplasm. Its subcellular location is the cytoskeleton. It is found in the microtubule organizing center. The protein localises to the spindle pole body. The protein resides in the spindle. Has a role in sister chromatid separation. The chain is Phosphoprotein p93 (dis1) from Schizosaccharomyces pombe (strain 972 / ATCC 24843) (Fission yeast).